The following is a 242-amino-acid chain: Murein peptide amidase A (242 aa).

Positions 1–234 (MTVTRPRAER…FAMANLLRWH (234 aa)) constitute a Peptidase M14 domain. 3 residues coordinate Zn(2+): histidine 49, glutamate 52, and histidine 157. Glutamate 210 serves as the catalytic Proton donor/acceptor.

The protein belongs to the peptidase M14 family. As to quaternary structure, homodimer. It depends on Zn(2+) as a cofactor.

The protein localises to the cytoplasm. It catalyses the reaction L-alanyl-gamma-D-glutamyl-meso-2,6-diaminopimelate + H2O = L-alanyl-D-glutamate + meso-2,6-diaminopimelate. It functions in the pathway cell wall degradation; peptidoglycan degradation. Functionally, involved in muropeptide degradation. Catalyzes the hydrolysis of the gamma-D-glutamyl-diaminopimelic acid (gamma-D-Glu-Dap) amide bond in the murein tripeptide L-alanyl-gamma-D-glutamyl-meso-diaminopimelic acid, leading to the formation of L-Ala-gamma-D-Glu and Dap. In Escherichia coli O157:H7, this protein is Murein peptide amidase A.